A 372-amino-acid chain; its full sequence is Cytochrome b (372 aa).

4 consecutive transmembrane segments (helical) span residues 25–45 (FGSMLLTCSALQIMTGFFLSM), 69–90 (WMMQNLHAIGASMFFICVYIHV), 105–125 (WLSGTTLLIMLMATAFFGYVL), and 170–190 (FFALHFILPFGIISLSSLHIM). Heme b-binding residues include His75 and His89. 2 residues coordinate heme b: His174 and His188. His193 contacts a ubiquinone. 4 helical membrane passes run 218-238 (YKDLFMISSMIMIMLLTISFI), 280-300 (LGGALALAMSIMILLTVPFTH), 312-332 (FMQLMFWTLVATFMIITWTAT), and 339-358 (YTMISQVTSSLYFMFFMSNP).

It belongs to the cytochrome b family. In terms of assembly, the cytochrome bc1 complex contains 3 respiratory subunits (MT-CYB, CYC1 and UQCRFS1), 2 core proteins (UQCRC1 and UQCRC2) and probably 6 low-molecular weight proteins. Heme b is required as a cofactor.

It is found in the mitochondrion inner membrane. Its function is as follows. Component of the ubiquinol-cytochrome c reductase complex (complex III or cytochrome b-c1 complex) that is part of the mitochondrial respiratory chain. The b-c1 complex mediates electron transfer from ubiquinol to cytochrome c. Contributes to the generation of a proton gradient across the mitochondrial membrane that is then used for ATP synthesis. This Acrantophis madagascariensis (Madagascar ground boa) protein is Cytochrome b (MT-CYB).